The primary structure comprises 1030 residues: uncharacterized protein (1030 aa).

Residues 51–86 (IKVSFTAKDGELTCKCSCLANVDNCVHIVAVLLKYH) form an SWIM-type zinc finger. Residues 590-751 (RGLEENKFGG…WSCFDFVLPS (162 aa)) enclose the Helicase ATP-binding domain. Residue 603–610 (DEMGLGKT) participates in ATP binding. Positions 702–705 (DEAQ) match the DEAQ box motif. The Helicase C-terminal domain maps to 867 to 1021 (ALEIIHEAIE…EDVNFFESLT (155 aa)).

It belongs to the SNF2/RAD54 helicase family.

This is an uncharacterized protein from Mycoplasma pneumoniae (strain ATCC 29342 / M129 / Subtype 1) (Mycoplasmoides pneumoniae).